Here is a 287-residue protein sequence, read N- to C-terminus: 4-diphosphocytidyl-2-C-methyl-D-erythritol kinase (287 aa).

Lys-10 is an active-site residue. 94–104 contributes to the ATP binding site; it reads PVAAGLGGGSA. The active site involves Asp-136.

It belongs to the GHMP kinase family. IspE subfamily.

It catalyses the reaction 4-CDP-2-C-methyl-D-erythritol + ATP = 4-CDP-2-C-methyl-D-erythritol 2-phosphate + ADP + H(+). It participates in isoprenoid biosynthesis; isopentenyl diphosphate biosynthesis via DXP pathway; isopentenyl diphosphate from 1-deoxy-D-xylulose 5-phosphate: step 3/6. Catalyzes the phosphorylation of the position 2 hydroxy group of 4-diphosphocytidyl-2C-methyl-D-erythritol. This chain is 4-diphosphocytidyl-2-C-methyl-D-erythritol kinase, found in Pelotomaculum thermopropionicum (strain DSM 13744 / JCM 10971 / SI).